The chain runs to 495 residues: Protein nucleotidyltransferase YdiU (495 aa).

ATP contacts are provided by glycine 92, glycine 94, arginine 95, lysine 114, aspartate 126, glycine 127, arginine 177, and arginine 184. The active-site Proton acceptor is aspartate 261. Mg(2+) is bound by residues asparagine 262 and aspartate 271. Position 271 (aspartate 271) interacts with ATP.

It belongs to the SELO family. Mg(2+) serves as cofactor. The cofactor is Mn(2+).

The catalysed reaction is L-seryl-[protein] + ATP = 3-O-(5'-adenylyl)-L-seryl-[protein] + diphosphate. It carries out the reaction L-threonyl-[protein] + ATP = 3-O-(5'-adenylyl)-L-threonyl-[protein] + diphosphate. It catalyses the reaction L-tyrosyl-[protein] + ATP = O-(5'-adenylyl)-L-tyrosyl-[protein] + diphosphate. The enzyme catalyses L-histidyl-[protein] + UTP = N(tele)-(5'-uridylyl)-L-histidyl-[protein] + diphosphate. The catalysed reaction is L-seryl-[protein] + UTP = O-(5'-uridylyl)-L-seryl-[protein] + diphosphate. It carries out the reaction L-tyrosyl-[protein] + UTP = O-(5'-uridylyl)-L-tyrosyl-[protein] + diphosphate. Functionally, nucleotidyltransferase involved in the post-translational modification of proteins. It can catalyze the addition of adenosine monophosphate (AMP) or uridine monophosphate (UMP) to a protein, resulting in modifications known as AMPylation and UMPylation. The protein is Protein nucleotidyltransferase YdiU of Bordetella bronchiseptica (strain ATCC BAA-588 / NCTC 13252 / RB50) (Alcaligenes bronchisepticus).